We begin with the raw amino-acid sequence, 266 residues long: Putative carbamate hydrolase RutD (266 aa).

It belongs to the AB hydrolase superfamily. Hydrolase RutD family.

The catalysed reaction is carbamate + 2 H(+) = NH4(+) + CO2. Its function is as follows. Involved in pyrimidine catabolism. May facilitate the hydrolysis of carbamate, a reaction that can also occur spontaneously. The polypeptide is Putative carbamate hydrolase RutD (Escherichia coli O157:H7).